We begin with the raw amino-acid sequence, 339 residues long: MYQLFRHGIFQMDAEKAHDFTIQCLKLASNPLFQPILKSLIHAPKGFPKTVMGVNFPNPIGLAAGADKNGDAIDGFGTLGFGFLEVGTVTPVAQDGNAKPRQFRLIEAEGIINRNGFNNNGIDYLIENVKNARYKGVIGINIGKNKFTSLEQGKDDYIFCLNKAYNYAGYITVNISSPNTPDLRQLQYGDYFDDLLRSIKDRQAILANQYNKYVPIAVKIAPDLTESELVQIADTLVRHKMDGVIATNTTVSRDTVMGMKNAEQQGGLSGKPLQHKSTEIIKRLHQELKGQIPIIGSGGIDGLQNAQEKIEAGAELLQVYSGLIYHGPKLVKELVKNIK.

FMN contacts are provided by residues 64 to 68 and Thr88; that span reads AGADK. Lys68 serves as a coordination point for substrate. Position 113 to 117 (113 to 117) interacts with substrate; the sequence is NRNGF. FMN-binding residues include Asn141 and Asn174. A substrate-binding site is contributed by Asn174. Residue Ser177 is the Nucleophile of the active site. A substrate-binding site is contributed by Asn179. Residues Lys219 and Thr247 each coordinate FMN. 248–249 provides a ligand contact to substrate; that stretch reads NT. Residues Gly270, Gly299, and 320–321 contribute to the FMN site; that span reads YS.

The protein belongs to the dihydroorotate dehydrogenase family. Type 2 subfamily. In terms of assembly, monomer. The cofactor is FMN.

The protein resides in the cell membrane. The enzyme catalyses (S)-dihydroorotate + a quinone = orotate + a quinol. It participates in pyrimidine metabolism; UMP biosynthesis via de novo pathway; orotate from (S)-dihydroorotate (quinone route): step 1/1. Its function is as follows. Catalyzes the conversion of dihydroorotate to orotate with quinone as electron acceptor. The polypeptide is Dihydroorotate dehydrogenase (quinone) (Haemophilus influenzae (strain 86-028NP)).